The following is a 318-amino-acid chain: NADH-ubiquinone oxidoreductase chain 1 (318 aa).

8 consecutive transmembrane segments (helical) span residues 2–22 (FMVNLLLLIIPALIAMAFLTL), 76–96 (TLALSIALLMWSPLPMPHPLI), 98–118 (FNLGLLFMLATSSLAVYSILW), 140–160 (ISYEVTLAIILLSTLLMSGSF), 171–191 (HSWLLLPSWPMAMMWFTSTLA), 217–237 (AGSFALFFMAEYMNIIMMNAL), 253–273 (ELYTMNFMTKTLLLTTLFLWI), and 294–314 (LPLTLALCMWYISMPALTSGI).

This sequence belongs to the complex I subunit 1 family. Core subunit of respiratory chain NADH dehydrogenase (Complex I) which is composed of 45 different subunits.

The protein localises to the mitochondrion inner membrane. It carries out the reaction a ubiquinone + NADH + 5 H(+)(in) = a ubiquinol + NAD(+) + 4 H(+)(out). Core subunit of the mitochondrial membrane respiratory chain NADH dehydrogenase (Complex I) which catalyzes electron transfer from NADH through the respiratory chain, using ubiquinone as an electron acceptor. Essential for the catalytic activity and assembly of complex I. The sequence is that of NADH-ubiquinone oxidoreductase chain 1 (MT-ND1) from Ateles paniscus (Black spider monkey).